The following is an 888-amino-acid chain: Protein sey1 (888 aa).

The segment at 1 to 24 is disordered; that stretch reads MDMATSNINGHGDRPSPAARFPTA. At 1-771 the chain is on the cytoplasmic side; that stretch reads MDMATSNING…KRSAIGGVAQ (771 aa). The GB1/RHD3-type G domain maps to 76–315; sequence GFNYHLISVF…FEGGVFLPEY (240 aa). 86–93 is a GTP binding site; sequence GSQSTGKS. A disordered region spans residues 703 to 723; sequence GNTPASVDPKDEEDLTPIGGV. The segment covering 712–723 has biased composition (acidic residues); the sequence is KDEEDLTPIGGV. Residues 724-745 adopt a coiled-coil conformation; sequence DEEEGKSLEEEMTVLSEAKRQD. Residues 772 to 792 traverse the membrane as a helical segment; the sequence is VPLYFYGLLLALGWNEIVAVL. Residues 793–795 lie on the Lumenal side of the membrane; the sequence is RNP. Residues 796 to 816 form a helical membrane-spanning segment; the sequence is IYFVFLILCGVAGYVTYTLNL. Residues 817–888 are Cytoplasmic-facing; sequence WGPIIRMLNA…VREDEDVDEI (72 aa).

Belongs to the TRAFAC class dynamin-like GTPase superfamily. GB1/RHD3 GTPase family. RHD3 subfamily.

It is found in the endoplasmic reticulum membrane. In terms of biological role, cooperates with the reticulon proteins and tubule-shaping DP1 family proteins to generate and maintain the structure of the tubular endoplasmic reticulum network. Has GTPase activity, which is required for its function in ER organization. The sequence is that of Protein sey1 (sey1) from Sclerotinia sclerotiorum (strain ATCC 18683 / 1980 / Ss-1) (White mold).